The following is a 206-amino-acid chain: Small ribosomal subunit protein uS4 (206 aa).

Residues 96–156 (CRLDNVVYRM…EKSKNQLRIA (61 aa)) enclose the S4 RNA-binding domain.

Belongs to the universal ribosomal protein uS4 family. Part of the 30S ribosomal subunit. Contacts protein S5. The interaction surface between S4 and S5 is involved in control of translational fidelity.

One of the primary rRNA binding proteins, it binds directly to 16S rRNA where it nucleates assembly of the body of the 30S subunit. In terms of biological role, with S5 and S12 plays an important role in translational accuracy. The sequence is that of Small ribosomal subunit protein uS4 from Ectopseudomonas mendocina (strain ymp) (Pseudomonas mendocina).